The following is a 591-amino-acid chain: MSERLMAGRLNEKNIGEKVLLKGWVQKRRDLGGLIFIDLRDKSGLIQVVFNPDHSKKALETAENIRSEYVIEINGTVVARDEATINPSMKTGKIEVNASSVQILNKAKTPPFTIQDETDVSEDVRLKYRYLDLRRNSLQETFRLRHQTTQSIRNYLNDKDFLEMETPILTKSTPEGARDYLVPSRVHPGEFYALPQSPQLFKQLIMMGGFERYYQIARCFRDEDLRADRQPEFTQIDIETSFLTSDEIMDMTEHMMKKVMKEVKDIDISLPLPRMPYQEAMDRYGSDKPDTRFDLELIHVSDIVASSGFKVFSQAVDNGGKVALLNIKGKADNYSRKDIDKLTEYVKVYDAKGLAWLKADESELKGPIAKFLSEEEVAGIRDRANVEQGDLLLFVADKTNVVYDSLGALRLYLGKELGLIDESKFHFLWVTDWPLLEYDEGLGRYFAAHHPFTSAIEEDLDKLETDPASVRANAYDLVLNGFELGGGSIRIHQKEQQDQMFKVLGFSEEEARSQFGFLLDALEYGAPPHGGIALGLDRIIMLLAGRSNLRDTILFPKTASASDLMTAAPSGVSDDQLQELSIQLQSGEKNQ.

An L-aspartate-binding site is contributed by glutamate 175. The tract at residues 199-202 (QLFK) is aspartate. L-aspartate is bound at residue arginine 221. ATP-binding positions include 221-223 (RDE) and glutamine 230. Residue histidine 449 participates in L-aspartate binding. Glutamate 483 contacts ATP. Arginine 490 lines the L-aspartate pocket. An ATP-binding site is contributed by 535–538 (GLDR).

Belongs to the class-II aminoacyl-tRNA synthetase family. Type 1 subfamily. In terms of assembly, homodimer.

The protein localises to the cytoplasm. The catalysed reaction is tRNA(Asp) + L-aspartate + ATP = L-aspartyl-tRNA(Asp) + AMP + diphosphate. Functionally, catalyzes the attachment of L-aspartate to tRNA(Asp) in a two-step reaction: L-aspartate is first activated by ATP to form Asp-AMP and then transferred to the acceptor end of tRNA(Asp). This Oceanobacillus iheyensis (strain DSM 14371 / CIP 107618 / JCM 11309 / KCTC 3954 / HTE831) protein is Aspartate--tRNA ligase.